The following is a 126-amino-acid chain: MPDPAKSAPAPKKGSKKAVTKAQKKDGKKRKRSRKESYSIYVYKVLKQVHPDTGISSKAMGIMNSFVNDIFERIAGEASRLAHYNKRSTITSREIQTAVRLLLPGELAKHAVSEGTKAVTKYTSSK.

Residues 1-12 (MPDPAKSAPAPK) show a composition bias toward low complexity. The tract at residues 1-35 (MPDPAKSAPAPKKGSKKAVTKAQKKDGKKRKRSRK) is disordered. At Pro2 the chain carries N-acetylproline; partial. Lys6 carries the N6-(2-hydroxyisobutyryl)lysine; alternate modification. An N6-(beta-hydroxybutyryl)lysine; alternate modification is found at Lys6. Lys6 is modified (N6-acetyllysine; alternate). Position 6 is an N6-butyryllysine; alternate (Lys6). Lys6 is subject to N6-crotonyllysine; alternate. Lys6 is subject to N6-lactoyllysine; alternate. A Glycyl lysine isopeptide (Lys-Gly) (interchain with G-Cter in SUMO2); alternate cross-link involves residue Lys6. Ser7 carries the ADP-ribosylserine modification. N6-(beta-hydroxybutyryl)lysine; alternate is present on Lys12. Residues Lys12 and Lys13 each carry the N6-acetyllysine; alternate modification. N6-crotonyllysine; alternate occurs at positions 12 and 13. Lys12 is subject to N6-lactoyllysine; alternate. The residue at position 13 (Lys13) is an N6-(2-hydroxyisobutyryl)lysine; alternate. Ser15 carries the phosphoserine; by STK4/MST1 modification. N6-acetyllysine; alternate is present on residues Lys16, Lys17, Lys21, and Lys24. N6-crotonyllysine; alternate is present on residues Lys16, Lys17, Lys21, and Lys24. Lys16, Lys17, Lys21, and Lys24 each carry N6-lactoyllysine; alternate. N6-(beta-hydroxybutyryl)lysine; alternate occurs at positions 17 and 21. Lys17 carries the post-translational modification N6-glutaryllysine; alternate. Lys21 and Lys24 each carry N6-(2-hydroxyisobutyryl)lysine; alternate. An N6-butyryllysine; alternate modification is found at Lys21. Residue Lys21 forms a Glycyl lysine isopeptide (Lys-Gly) (interchain with G-Cter in SUMO2); alternate linkage. Lys25 is modified (N6-(2-hydroxyisobutyryl)lysine). Lys35 is subject to N6-(2-hydroxyisobutyryl)lysine; alternate. Position 35 is an N6-(beta-hydroxybutyryl)lysine; alternate (Lys35). N6-crotonyllysine; alternate is present on Lys35. At Lys35 the chain carries N6-glutaryllysine; alternate. Residue Lys35 is modified to N6-succinyllysine; alternate. Residue Lys35 forms a Glycyl lysine isopeptide (Lys-Gly) (interchain with G-Cter in ubiquitin); alternate linkage. Glu36 carries the polyADP-ribosyl glutamic acid modification. The residue at position 37 (Ser37) is a Phosphoserine; by AMPK. N6-(2-hydroxyisobutyryl)lysine; alternate occurs at positions 44, 47, and 58. Lys44 carries the N6-lactoyllysine; alternate modification. An N6-glutaryllysine; alternate mark is found at Lys44 and Lys47. Position 47 is an N6-methyllysine; alternate (Lys47). Lys58 is modified (N6,N6-dimethyllysine; alternate). Position 80 is a dimethylated arginine (Arg80). Lys86 carries the N6-(2-hydroxyisobutyryl)lysine; alternate modification. An N6-(beta-hydroxybutyryl)lysine; alternate modification is found at Lys86. Lys86 carries the N6-acetyllysine; alternate modification. Lys86 bears the N6-lactoyllysine; alternate mark. Residue Lys86 is modified to N6,N6,N6-trimethyllysine; alternate. Residues Arg87 and Arg93 each carry the omega-N-methylarginine modification. At Lys109 the chain carries N6-(2-hydroxyisobutyryl)lysine; alternate. Lys109 bears the N6-lactoyllysine; alternate mark. Lys109 carries the N6-glutaryllysine; alternate modification. At Lys109 the chain carries N6-methyllysine; alternate. Ser113 carries O-linked (GlcNAc) serine glycosylation. The residue at position 116 (Thr116) is a Phosphothreonine. N6-(2-hydroxyisobutyryl)lysine; alternate is present on residues Lys117 and Lys121. Residues Lys117 and Lys121 each carry the N6-(beta-hydroxybutyryl)lysine; alternate modification. N6-lactoyllysine; alternate occurs at positions 117 and 121. N6-glutaryllysine; alternate is present on residues Lys117 and Lys121. N6-succinyllysine; alternate occurs at positions 117 and 121. An N6-malonyllysine; alternate modification is found at Lys117. Lys117 is subject to N6-methylated lysine; alternate. Residue Lys121 forms a Glycyl lysine isopeptide (Lys-Gly) (interchain with G-Cter in ubiquitin); alternate linkage.

It belongs to the histone H2B family. The nucleosome is a histone octamer containing two molecules each of H2A, H2B, H3 and H4 assembled in one H3-H4 heterotetramer and two H2A-H2B heterodimers. The octamer wraps approximately 147 bp of DNA. In terms of processing, monoubiquitination at Lys-35 (H2BK34Ub) by the MSL1/MSL2 dimer is required for histone H3 'Lys-4' (H3K4me) and 'Lys-79' (H3K79me) methylation and transcription activation at specific gene loci, such as HOXA9 and MEIS1 loci. Similarly, monoubiquitination at Lys-121 (H2BK120Ub) by the RNF20/40 complex gives a specific tag for epigenetic transcriptional activation and is also prerequisite for histone H3 'Lys-4' and 'Lys-79' methylation. It also functions cooperatively with the FACT dimer to stimulate elongation by RNA polymerase II. H2BK120Ub also acts as a regulator of mRNA splicing: deubiquitination by USP49 is required for efficient cotranscriptional splicing of a large set of exons. Phosphorylation at Ser-37 (H2BS36ph) by AMPK in response to stress promotes transcription. Phosphorylated on Ser-15 (H2BS14ph) by STK4/MST1 during apoptosis; which facilitates apoptotic chromatin condensation. Also phosphorylated on Ser-15 in response to DNA double strand breaks (DSBs), and in correlation with somatic hypermutation and immunoglobulin class-switch recombination. Post-translationally, glcNAcylation at Ser-113 promotes monoubiquitination of Lys-121. It fluctuates in response to extracellular glucose, and associates with transcribed genes. In terms of processing, ADP-ribosylated by PARP1 or PARP2 on Ser-7 (H2BS6ADPr) in response to DNA damage. H2BS6ADPr promotes recruitment of CHD1L. Poly ADP-ribosylation on Glu-36 (H2BE35ADPr) by PARP1 regulates adipogenesis: it inhibits phosphorylation at Ser-37 (H2BS36ph), thereby blocking expression of pro-adipogenetic genes. Crotonylation (Kcr) is specifically present in male germ cells and marks testis-specific genes in post-meiotic cells, including X-linked genes that escape sex chromosome inactivation in haploid cells. Crotonylation marks active promoters and enhancers and confers resistance to transcriptional repressors. It is also associated with post-meiotically activated genes on autosomes. Post-translationally, lactylated in macrophages by EP300/P300 by using lactoyl-CoA directly derived from endogenous or exogenous lactate, leading to stimulates gene transcription.

The protein localises to the nucleus. It localises to the chromosome. Core component of nucleosome. Nucleosomes wrap and compact DNA into chromatin, limiting DNA accessibility to the cellular machineries which require DNA as a template. Histones thereby play a central role in transcription regulation, DNA repair, DNA replication and chromosomal stability. DNA accessibility is regulated via a complex set of post-translational modifications of histones, also called histone code, and nucleosome remodeling. The protein is Histone H2B type 1-O of Homo sapiens (Human).